The following is a 69-amino-acid chain: Protein transport protein Sec61 subunit gamma (69 aa).

The Cytoplasmic segment spans residues 1–32 (MDAVDSVVDPLREFAKDSVRLVKRCHKPDRKE). A helical transmembrane segment spans residues 33-61 (FTKVAARTAIGFVVMGFVGFFVKLIFIPI). The Extracellular segment spans residues 62 to 69 (NNIIVGSG).

Belongs to the SecE/SEC61-gamma family. Heterotrimeric complex composed of SEC61-alpha, SEC61-beta and SEC61-gamma.

The protein resides in the endoplasmic reticulum membrane. Necessary for protein translocation in the endoplasmic reticulum. The protein is Protein transport protein Sec61 subunit gamma of Oryza sativa subsp. japonica (Rice).